The sequence spans 437 residues: Protein translocase subunit SecY (437 aa).

Transmembrane regions (helical) follow at residues 19 to 39, 69 to 89, 122 to 142, 157 to 177, 189 to 209, 219 to 239, 275 to 295, 318 to 338, 378 to 398, and 400 to 420; these read LFTL…IPGV, LLQI…SIIL, VALA…GALF, IFTT…VMWL, GMSI…LWAI, WIEF…VVFV, GVIP…IVQF, HIIL…AISF, GSLY…GFGA, and QNFP…LETV.

The protein belongs to the SecY/SEC61-alpha family. In terms of assembly, component of the Sec protein translocase complex. Heterotrimer consisting of SecY, SecE and SecG subunits. The heterotrimers can form oligomers, although 1 heterotrimer is thought to be able to translocate proteins. Interacts with the ribosome. Interacts with SecDF, and other proteins may be involved. Interacts with SecA.

It is found in the cell membrane. In terms of biological role, the central subunit of the protein translocation channel SecYEG. Consists of two halves formed by TMs 1-5 and 6-10. These two domains form a lateral gate at the front which open onto the bilayer between TMs 2 and 7, and are clamped together by SecE at the back. The channel is closed by both a pore ring composed of hydrophobic SecY resides and a short helix (helix 2A) on the extracellular side of the membrane which forms a plug. The plug probably moves laterally to allow the channel to open. The ring and the pore may move independently. This chain is Protein translocase subunit SecY, found in Streptomyces lividans.